A 512-amino-acid polypeptide reads, in one-letter code: MRAEVLQIRWHYDANDDHTPIYSVDFQKNSLNKFATCGGDSKIRIWQLITSESSTKVEYLSTLSRHTQAVNVVRFNPEGNILATAGDEGTIMLWVPTNTPITTLADDAEELALAKEYWKVKIVCRSMGSEIYDLCWSVDSNFLIAGAMDNSLRLYDAHTGQLLTQKFDHSHYVQGVCWDPLNQYIVSESSDRSICLYEIQEEKKNPKKFQLVLKSRICRIEYNVTKFELISVTKPLNNDESSGISEPIETSNNNESPVSKHEALSSTANIVKDGSLERTEPPNSLNSKISYSLYCNETLVSFFRRPAFSPDGLLLVTPAGRLRPHGQPNFEVPYTAYIYTRGSITKQPVACLNGFKKPVIAVRFSPIHYELNSFSNFSFTSVSFNLPYRMVFAVACQDAVYIYDTQTCKPFYRAVNLHYSNLTDIAWNDDGNVLLMTSIDGFCSVITFEPGELGVKSQHKISLPEKRSASPSSIDDSQDNTAGGPATTTLIPRKVESSKVSKKRIAPTPVYP.

WD repeat units follow at residues 16-56 (DDHT…SSTK), 65-105 (RHTQ…TTLA), 126-165 (SMGSEIYDLCWSVDSNFLIAGAMDNSLRLYDAHTGQLLTQ), and 168-207 (DHSHYVQGVCWDPLNQYIVSESSDRSICLYEIQEEKKNPK). The segment covering 239 to 257 (DESSGISEPIETSNNNESP) has biased composition (polar residues). The disordered stretch occupies residues 239–261 (DESSGISEPIETSNNNESPVSKH). WD repeat units follow at residues 373–413 (SFSN…PFYR) and 417–458 (LHYS…VKSQ). The disordered stretch occupies residues 459–512 (HKISLPEKRSASPSSIDDSQDNTAGGPATTTLIPRKVESSKVSKKRIAPTPVYP). Serine 468, serine 470, and serine 473 each carry phosphoserine. Residues 469–490 (ASPSSIDDSQDNTAGGPATTTL) are compositionally biased toward polar residues.

It belongs to the WD repeat HIR1 family. In terms of assembly, component of chromatin assembly factor 1 (CAF-1), composed of pcf1, pcf2 and pcf3. Interacts with pcn1/PCNA during S-phase. Interacts with swi6 at the G1/S-phase transition and early S-phase, but not in the G2 phase. The CAF-1 complex interacts with histone H3-H4 dimers.

Its subcellular location is the cytoplasm. It is found in the nucleus. Functionally, acts as a component of the histone chaperone complex chromatin assembly factor 1 (CAF-1), which assembles histone octamers onto DNA during replication and repair. CAF-1 performs the first step of the nucleosome assembly process, bringing newly synthesized histones H3 and H4 to replicating DNA; histones H2A/H2B can bind to this chromatin precursor subsequent to DNA replication to complete the histone octamer. Plays a role in the maintenance of heterochromatin. The chain is Chromatin assembly factor 1 subunit B from Schizosaccharomyces pombe (strain 972 / ATCC 24843) (Fission yeast).